The primary structure comprises 111 residues: Wound-induced proteinase inhibitor 1 (111 aa).

A signal peptide spans 1–23; sequence MEAKFAHIILFFLLAFSFETLMA. A propeptide spanning residues 24–36 is cleaved from the precursor; it reads RKESDGPEVIKLL.

The protein belongs to the protease inhibitor I13 (potato type I serine protease inhibitor) family.

Its subcellular location is the secreted. This Solanum peruvianum (Peruvian tomato) protein is Wound-induced proteinase inhibitor 1.